Here is a 355-residue protein sequence, read N- to C-terminus: Replication-associated protein (355 aa).

The 104-residue stretch at 11-114 (LHRTANTFLT…PLALFERGTF (104 aa)) folds into the CRESS-DNA virus Rep endonuclease domain. An RCR-1 motif is present at residues 18 to 21 (FLTY). A divalent metal cation-binding residues include Glu-52, His-60, and His-62. Residues 60–62 (HLH) carry the RCR-2 motif. The For DNA cleavage activity role is filled by Tyr-100. The short motif at 100-103 (YILK) is the RCR-3 element. Glu-104 is an a divalent metal cation binding site. Residues 175–187 (SANKLFPDIQEEF) are oligomerization. 229–236 (GPTRTGKS) is an ATP binding site. The segment at 252–270 (VDWSSYNEDAIYNIVDDIP) is transactivation. The short motif at 292-303 (KYGKKKKVQMKS) is the Nuclear localization signal element.

The protein belongs to the geminiviridae Rep protein family. In terms of assembly, homooligomer. Rep binds to repeated DNA motifs (iterons). Forms the O-complex, which is a Rep-DNA complex involved in the initiation of RCR. Part of the C- and V-complexes which are RepA-Rep-DNA complexes involved in the c-sense and v-sense transcription. The cofactor is Mg(2+). Requires Mn(2+) as cofactor.

The protein resides in the host nucleus. Essential for the replication of viral ssDNA. The closed circular ssDNA genome is first converted to a superhelical dsDNA. Rep binds a specific region at the genome origin of replication. It introduces an endonucleolytic nick within the conserved sequence 5'-TAATATTAC-3' in the intergenic region of the genome present in all geminiviruses, thereby initiating the rolling circle replication (RCR). Following cleavage, binds covalently to the 5'-phosphate of DNA as a tyrosyl ester. The cleavage gives rise to a free 3'-OH that serves as a primer for the cellular DNA polymerase. The polymerase synthesizes the (+) strand DNA by rolling circle mechanism. After one round of replication, a Rep-catalyzed nucleotidyl transfer reaction releases a circular single-stranded virus genome, thereby terminating the replication. Displays origin-specific DNA cleavage, nucleotidyl transferase, ATPase and helicase activities. Acts as an inhibitor of C-sense gene transcription. This Maize streak virus genotype D (isolate Raw) (MSV) protein is Replication-associated protein.